A 272-amino-acid polypeptide reads, in one-letter code: Large ribosomal subunit protein uL2 (272 aa).

The tract at residues 247-272 (PWGQPCKGFKTRNNKRTNSSIIKRRK) is disordered. A compositionally biased stretch (polar residues) spans 262–272 (RTNSSIIKRRK).

The protein belongs to the universal ribosomal protein uL2 family. Part of the 50S ribosomal subunit. Forms a bridge to the 30S subunit in the 70S ribosome.

One of the primary rRNA binding proteins. Required for association of the 30S and 50S subunits to form the 70S ribosome, for tRNA binding and peptide bond formation. It has been suggested to have peptidyltransferase activity; this is somewhat controversial. Makes several contacts with the 16S rRNA in the 70S ribosome. This Bdellovibrio bacteriovorus (strain ATCC 15356 / DSM 50701 / NCIMB 9529 / HD100) protein is Large ribosomal subunit protein uL2.